Here is a 635-residue protein sequence, read N- to C-terminus: Biosynthetic arginine decarboxylase (635 aa).

K100 is modified (N6-(pyridoxal phosphate)lysine). Position 282–292 (282–292) interacts with substrate; sequence VDIGGGLGVDY.

It belongs to the Orn/Lys/Arg decarboxylase class-II family. SpeA subfamily. The cofactor is Mg(2+). Pyridoxal 5'-phosphate serves as cofactor.

The enzyme catalyses L-arginine + H(+) = agmatine + CO2. Its pathway is amine and polyamine biosynthesis; agmatine biosynthesis; agmatine from L-arginine: step 1/1. Functionally, catalyzes the biosynthesis of agmatine from arginine. This chain is Biosynthetic arginine decarboxylase, found in Geobacter metallireducens (strain ATCC 53774 / DSM 7210 / GS-15).